The following is a 356-amino-acid chain: MAYKLLIINPGSTSTKIGVYEGEKEILEETLRHSAEEILKYDTIFDQLDFRKEVILKVLKEKGIDINELDAVVGRGGMLKPIEGGTYEVNEAMVEDLKIGVQGPHASNLGGILSNEIAKEIGKRAFIVDPVVVDEMEDVARLSGVPELPRKSKFHALNQKAVAKRYAKEHNTSYEDVNLIVVHMGGGVSVGAHRKGRVIDVNNALDGDGPFSPERAGGVPSGELLEMCFSGKYSKEEVYKKLVGKGGFVAYANTNDARDLIKLSQEGDEKGSLIFNAFIYQIAKEIGSMAVVLDGEVDAIVLTGGIAYSDYVTNAINKKVKWIAPMVVYGGEDELLALAQGAIRVLDGVEEAKIYK.

Belongs to the acetokinase family.

It is found in the cytoplasm. The catalysed reaction is butanoate + ATP = butanoyl phosphate + ADP. It functions in the pathway lipid metabolism; butanoate metabolism. Catalyzes the conversion of butyryl-CoA through butyryl phosphate to butyrate. The sequence is that of Butyrate kinase (buk) from Clostridium perfringens (strain ATCC 13124 / DSM 756 / JCM 1290 / NCIMB 6125 / NCTC 8237 / Type A).